The chain runs to 59 residues: Potassium channel toxin alpha-KTx 16.4 (59 aa).

An N-terminal signal peptide occupies residues 1–22 (MKILSIVLIALIICSISICTEA). Cystine bridges form between C30–C51, C36–C56, and C40–C58.

Belongs to the short scorpion toxin superfamily. Potassium channel inhibitor family. Alpha-KTx 16 subfamily. Expressed by the venom gland.

It is found in the secreted. In terms of biological role, weak inhibitor of voltage-gated potassium channel hKv1.3/KCNA3. The polypeptide is Potassium channel toxin alpha-KTx 16.4 (Mesobuthus eupeus (Lesser Asian scorpion)).